Consider the following 493-residue polypeptide: NAD(P)H dehydrogenase (quinone) (493 aa).

Residues 12-13 (PA), 35-37 (DCD), 42-43 (AA), Lys52, Gly117, Asp317, 324-325 (LA), and Tyr450 contribute to the FAD site.

The protein belongs to the class-I pyridine nucleotide-disulfide oxidoreductase family. In terms of assembly, homotetramer. Requires FAD as cofactor.

The catalysed reaction is a quinone + NADH + H(+) = a quinol + NAD(+). It carries out the reaction a quinone + NADPH + H(+) = a quinol + NADP(+). May contribute to virulence by increasing resistance to reactive oxygen intermediates. It can reduce 2,6-dimethyl-1,4-benzoquinone (DMBQ), 5-hydroxy-1,4-naphthaquinone (5-HNQ) and menadione. The polypeptide is NAD(P)H dehydrogenase (quinone) (lpdA) (Mycobacterium tuberculosis (strain CDC 1551 / Oshkosh)).